A 542-amino-acid polypeptide reads, in one-letter code: Retron Ec83 probable ATPase (542 aa).

The ATP-binding signature appears at 92–99; the sequence is GNNGCGKS.

In terms of biological role, probable ATPase component of antiviral defense system retron Ec83, composed of a non-coding RNA (ncRNA), a reverse transcriptase (RT), this protein and a putative HNH endonuclease. Expression of retron Ec83 confers protection against bacteriophage T2, T4 and T6. At multiplicity of infection (MOI) of 0.02 cultures slow growth when infected with T4 but do not collapse, at MOI 2 cultures enter growth stasis. This chain is Retron Ec83 probable ATPase, found in Escherichia coli.